A 296-amino-acid chain; its full sequence is Decaprenyl diphosphate synthase (296 aa).

The segment at 1–24 is disordered; that stretch reads MARDARKRTSSNFPQLPPAPDDYP. D76 is an active-site residue. D76 is a binding site for Mg(2+). Substrate is bound by residues 76–80, W81, R89, H93, 121–124, W125, R127, R168, R244, and 250–252; these read DGNGR, STEN, and RSS. The active-site Proton acceptor is the N124. E263 serves as a coordination point for Mg(2+). A substrate-binding site is contributed by 292 to 294; sequence RFG.

It belongs to the UPP synthase family. As to quaternary structure, homodimer. Mg(2+) serves as cofactor. Requires Mn(2+) as cofactor.

The protein resides in the cell membrane. It carries out the reaction (2Z,6E)-farnesyl diphosphate + 7 isopentenyl diphosphate = (2Z,6Z,10Z,14Z,18Z,22Z,26Z,30Z,34E)-decaprenyl diphosphate + 7 diphosphate. It catalyses the reaction n isopentenyl diphosphate + (2E,6E)-farnesyl diphosphate = a di-trans,poly-cis-polyprenyl diphosphate + n diphosphate. Its activity is regulated as follows. Activated by dithiothreitol and inhibited by EDTA. In terms of biological role, catalyzes the sequential condensation of isopentenyl diphosphate (IPP) in the cis configuration with (2Z,6E)-farnesyl diphosphate (Z-FPP or EZ-FPP) generating the 50 carbon product trans,polycis-decaprenyl diphosphate. When (2E,6E)-farnesyl diphosphate (E-FPP or EE-FPP) is used in vitro, both primary products decaprenyl diphosphate and (2E,6E,10E)-geranylgeranyl diphosphate (EEE-GGPP) are synthesized. M.tuberculosis does not synthesize (2E,6E,10Z)-geranylgeranyl diphosphate (EEZ-GGPP) and heptaprenyl diphosphate. Can also accept many different allylic substrates, including E-geranyl diphosphate (E-GPP), neryl diphosphate (NPP), and all-trans-geranyl-geranyl diphosphate. The protein is Decaprenyl diphosphate synthase (uppS) of Mycobacterium tuberculosis (strain ATCC 25618 / H37Rv).